We begin with the raw amino-acid sequence, 632 residues long: tRNA 5-methylaminomethyl-2-thiouridine biosynthesis bifunctional protein MnmC (632 aa).

The tRNA (mnm(5)s(2)U34)-methyltransferase stretch occupies residues 1–247 (MNSRIFPAAM…KWHMTLGQRL (247 aa)). The tract at residues 267–632 (VGAGLAGAAV…TDLLAQIAPR (366 aa)) is FAD-dependent cmnm(5)s(2)U34 oxidoreductase.

The protein in the N-terminal section; belongs to the methyltransferase superfamily. tRNA (mnm(5)s(2)U34)-methyltransferase family. It in the C-terminal section; belongs to the DAO family. It depends on FAD as a cofactor.

It localises to the cytoplasm. The enzyme catalyses 5-aminomethyl-2-thiouridine(34) in tRNA + S-adenosyl-L-methionine = 5-methylaminomethyl-2-thiouridine(34) in tRNA + S-adenosyl-L-homocysteine + H(+). Functionally, catalyzes the last two steps in the biosynthesis of 5-methylaminomethyl-2-thiouridine (mnm(5)s(2)U) at the wobble position (U34) in tRNA. Catalyzes the FAD-dependent demodification of cmnm(5)s(2)U34 to nm(5)s(2)U34, followed by the transfer of a methyl group from S-adenosyl-L-methionine to nm(5)s(2)U34, to form mnm(5)s(2)U34. The protein is tRNA 5-methylaminomethyl-2-thiouridine biosynthesis bifunctional protein MnmC of Bordetella bronchiseptica (strain ATCC BAA-588 / NCTC 13252 / RB50) (Alcaligenes bronchisepticus).